The sequence spans 288 residues: Alpha/beta hydrolase domain-containing protein 17B (288 aa).

Catalysis depends on charge relay system residues Ser170, Asp235, and His264.

Belongs to the AB hydrolase superfamily. ABHD17 family. In terms of processing, palmitoylated on cysteine residues located in a cysteine cluster at the N-terminus which promotes membrane localization.

Its subcellular location is the cell membrane. It is found in the recycling endosome membrane. The protein localises to the cell projection. The protein resides in the dendritic spine. It localises to the postsynaptic density membrane. It catalyses the reaction S-hexadecanoyl-L-cysteinyl-[protein] + H2O = L-cysteinyl-[protein] + hexadecanoate + H(+). In terms of biological role, hydrolyzes fatty acids from S-acylated cysteine residues in proteins. Has depalmitoylating activity towards nras. The chain is Alpha/beta hydrolase domain-containing protein 17B from Xenopus laevis (African clawed frog).